The following is a 378-amino-acid chain: Stimulator of interferon genes protein (378 aa).

The Cytoplasmic portion of the chain corresponds to 1–17 (MPHSSLHPSIPQPRGLR). The interval 1 to 190 (MPHSSLHPSI…IYNQFHNNTL (190 aa)) is mediates interaction with ZDHHC1 and ZDHHC11. The helical transmembrane segment at 18–34 (AQKAALVLLSACLVALW) threads the bilayer. The Lumenal segment spans residues 35–44 (GLGEPPDYTL). A helical transmembrane segment spans residues 45 to 69 (KWLVLHLASQQMGLLIKGICSLAEE). The Cytoplasmic segment spans residues 70 to 91 (LCHVHSRYHGSYWRAVRACLCS). Cys-88 carries S-palmitoyl cysteine lipidation. Residues 92–106 (SMRCGALLLLSCYFY) traverse the membrane as a helical segment. Topologically, residues 107–116 (CSLPNMADLP) are lumenal. A helical membrane pass occupies residues 117-134 (FTWMLALLGLSQALNILL). Topologically, residues 135–378 (GLQGLAPAEV…KPLPLRSDVF (244 aa)) are cytoplasmic. Lys-150 is covalently cross-linked (Glycyl lysine isopeptide (Lys-Gly) (interchain with G-Cter in ubiquitin)). The segment at 153 to 339 (FNVAHGLAWS…LQHLRQEERE (187 aa)) is cyclic dinucleotide-binding domain (CBD). Residues Ser-162 and Tyr-167 each coordinate 2',3'-cGAMP. The 3',3'-c-di-GMP site is built by Ser-162 and Tyr-167. Tyr-167 contacts 2',3'-cUAMP. Residue Lys-236 forms a Glycyl lysine isopeptide (Lys-Gly) (interchain with G-Cter in ubiquitin) linkage. Positions 238 and 263 each coordinate 2',3'-cGAMP. 2',3'-cUAMP-binding residues include Arg-238 and Thr-263. 3',3'-c-di-GMP is bound by residues 238–241 (RVYT) and Thr-263. The interval 339-378 (EVTMGSTETSVMPGSSVLSQEPELLISGLEKPLPLRSDVF) is C-terminal tail (CTT). A Phosphoserine modification is found at Ser-354. Ser-357 and Ser-365 each carry phosphoserine; by TBK1. The pLxIS motif signature appears at 362 to 365 (LLIS).

The protein belongs to the STING family. Homodimer; forms a homodimer in absence of cyclic nucleotide (c-di-GMP or cGAMP); 'Lys-63'-linked ubiquitination at Lys-150 is required for homodimerization. Homotetramer; in presence of cyclic nucleotide (c-di-GMP or cGAMP), forms tetramers and higher-order oligomers through side-by-side packing. Interacts (when phosphorylated) with IRF3; following activation and phosphorylation on the pLxIS motif by TBK1, recruits IRF3. Interacts with RIGI, MAVS and SSR2. Interacts with RNF5 and TRIM56. Interacts with TBK1; when homodimer, leading to subsequent production of IFN-beta. Interacts with IFIT1 and IFIT2. Interacts with TRIM29; this interaction induces STING1 ubiquitination and subsequent degradation. Associates with the MHC-II complex. Interacts with STEEP1; interaction takes place upon cGAMP-activation and STING1 phosphorylation by MAP3K7/TAK1 and promotes STING1 translocation to COPII vesicles. Interacts with SEC24A, SEC24B and SEC24C; promoting translocation to COPII vesicles. Interacts (when ubiquitinated) with SQSTM1; leading to relocalization to autophagosomes. Interacts with SURF4. Interacts with HNRNPA2B1. Interacts with ZDHHC1; ZDHHC1 constitutively interacts with STING1 and in presence of DNA viruses activates it by promoting its cGAMP-induced oligomerization and the recruitment of downstream signaling components. Interacts with ZDHHC11; in presence of DNA viruses promotes the recruitment of IRF3 to STING1. Interacts with TOMM70. Interacts with TAB1; promoting recruitment of TAB1 to the endoplasmic reticulum membrane and subsequent activation of MAP3K7/TAK1. Interacts (via transmembrane domain) with TMEM203. Interacts with DDX41. In terms of processing, phosphorylation by TBK1 leads to activation and production of IFN-beta. Following cyclic nucleotide (c-di-GMP or cGAMP)-binding, activation and translocation from the endoplasmic reticulum, STING1 is phosphorylated by TBK1 at Ser-365 in the pLxIS motif. The phosphorylated pLxIS motif constitutes an IRF3-binding motif, leading to recruitment of the transcription factor IRF3 to induce type-I interferons and other cytokines. Phosphorylated on tyrosine residues upon MHC-II aggregation. Dephosphorylation by PPP6C leads to inactivation and decreased production of IFN-beta. Phosphorylation at Ser-357 is also required to activate IRF3. Phosphorylation at Ser-354 by MAP3K7/TAK1 facilitates its interaction with STEEP1, promoting STING1 translocation to COPII vesicles. Ubiquitinated. Ubiquitinated via 'Lys-63'-linked ubiquitin chains in response to double-stranded DNA treatment, leading to relocalization to autophagosomes and subsequent degradation; this process is dependent on SQSTM1. 'Lys-63'-linked ubiquitination mediated by TRIM56 at Lys-150 promotes homodimerization and recruitment of the antiviral kinase TBK1 and subsequent production of IFN-beta. 'Lys-48'-linked polyubiquitination at Lys-150 occurring after viral infection is mediated by RNF5 and leads to proteasomal degradation. 'Lys-11'-linked polyubiquitination at Lys-150 by RNF26 leads to stabilize STING1: it protects STING1 from RNF5-mediated 'Lys-48'-linked polyubiquitination. 'Lys-33'-linked and 'Lys-48'-linked deubiquitinated by USP20; leading to its stabilization and promotion of innate antiviral response. 'Lys-48'-linked deubiquitinated by USP44; leading to its stabilization and promotion of innate antiviral response. 'Lys-63'-linked deubiquitinated by USP49; leading to inhibition of the subsequent recruitment of TBK1 to the signaling complex. 'Lys-63'-linked ubiquitination mediated by RNF39 promotes the activation of the cGAS-STING pathway. Post-translationally, palmitoylation takes place in the Golgi apparatus and creates a platform for the recruitment of TBK1.

It is found in the endoplasmic reticulum membrane. The protein resides in the cytoplasm. Its subcellular location is the perinuclear region. It localises to the endoplasmic reticulum-Golgi intermediate compartment membrane. The protein localises to the golgi apparatus membrane. It is found in the cytoplasmic vesicle. The protein resides in the autophagosome membrane. Its subcellular location is the mitochondrion outer membrane. It localises to the cell membrane. The enzyme catalyses H(+)(in) = H(+)(out). Functionally, facilitator of innate immune signaling that acts as a sensor of cytosolic DNA from bacteria and viruses and promotes the production of type I interferon (IFN-alpha and IFN-beta). Innate immune response is triggered in response to non-CpG double-stranded DNA from viruses and bacteria delivered to the cytoplasm. Acts by binding cyclic dinucleotides: recognizes and binds cyclic di-GMP (c-di-GMP), a second messenger produced by bacteria, cyclic UMP-AMP (2',3'-cUAMP), and cyclic GMP-AMP (cGAMP), a messenger produced by CGAS in response to DNA virus in the cytosol. Upon binding to c-di-GMP or cGAMP, STING oligomerizes, translocates from the endoplasmic reticulum and is phosphorylated by TBK1 on the pLxIS motif, leading to recruitment and subsequent activation of the transcription factor IRF3 to induce expression of type I interferon and exert a potent anti-viral state. Exhibits 2',3' phosphodiester linkage-specific ligand recognition: can bind both 2'-3' linked cGAMP (2'-3'-cGAMP) and 3'-3' linked cGAMP but is preferentially activated by 2'-3' linked cGAMP. The preference for 2'-3'-cGAMP, compared to other linkage isomers is probably due to the ligand itself, whichs adopts an organized free-ligand conformation that resembles the STING1-bound conformation and pays low energy costs in changing into the active conformation. In addition to promote the production of type I interferons, plays a direct role in autophagy. Following cGAMP-binding, STING1 buds from the endoplasmic reticulum into COPII vesicles, which then form the endoplasmic reticulum-Golgi intermediate compartment (ERGIC). The ERGIC serves as the membrane source for WIPI2 recruitment and LC3 lipidation, leading to formation of autophagosomes that target cytosolic DNA or DNA viruses for degradation by the lysosome. Promotes autophagy by acting as a proton channel that directs proton efflux from the Golgi to facilitate MAP1LC3B/LC3B lipidation. The autophagy- and interferon-inducing activities can be uncoupled and autophagy induction is independent of TBK1 phosphorylation. Autophagy is also triggered upon infection by bacteria: following c-di-GMP-binding, which is produced by live Gram-positive bacteria, promotes reticulophagy. May be involved in translocon function, the translocon possibly being able to influence the induction of type I interferons. May be involved in transduction of apoptotic signals via its association with the major histocompatibility complex class II (MHC-II). This is Stimulator of interferon genes protein from Bos taurus (Bovine).